A 439-amino-acid polypeptide reads, in one-letter code: UDP-N-acetylmuramate--L-alanine ligase (439 aa).

113-119 (GSHGKTS) provides a ligand contact to ATP.

This sequence belongs to the MurCDEF family.

It localises to the cytoplasm. It carries out the reaction UDP-N-acetyl-alpha-D-muramate + L-alanine + ATP = UDP-N-acetyl-alpha-D-muramoyl-L-alanine + ADP + phosphate + H(+). It participates in cell wall biogenesis; peptidoglycan biosynthesis. Functionally, cell wall formation. This Lactobacillus delbrueckii subsp. bulgaricus (strain ATCC 11842 / DSM 20081 / BCRC 10696 / JCM 1002 / NBRC 13953 / NCIMB 11778 / NCTC 12712 / WDCM 00102 / Lb 14) protein is UDP-N-acetylmuramate--L-alanine ligase.